A 245-amino-acid polypeptide reads, in one-letter code: tRNA pseudouridine synthase A (245 aa).

D52 functions as the Nucleophile in the catalytic mechanism. A substrate-binding site is contributed by Y111.

It belongs to the tRNA pseudouridine synthase TruA family. In terms of assembly, homodimer.

It catalyses the reaction uridine(38/39/40) in tRNA = pseudouridine(38/39/40) in tRNA. In terms of biological role, formation of pseudouridine at positions 38, 39 and 40 in the anticodon stem and loop of transfer RNAs. The protein is tRNA pseudouridine synthase A of Rickettsia peacockii (strain Rustic).